Consider the following 471-residue polypeptide: Ubiquitin-conjugating enzyme E2 variant 3 (471 aa).

The UEV domain maps to 2-145; it reads DVNSEPVKKV…EEEPPLGTKS (144 aa). 183–211 lines the NAD(+) pocket; the sequence is GDLGIAAVLSIMAKSCVDKLVLIDIPENS.

The protein in the N-terminal section; belongs to the ubiquitin-conjugating enzyme family. UEV subfamily. In the C-terminal section; belongs to the LDH/MDH superfamily. Homodimer.

In terms of biological role, possible negative regulator of polyubiquitination. The chain is Ubiquitin-conjugating enzyme E2 variant 3 (uevld) from Danio rerio (Zebrafish).